Consider the following 426-residue polypeptide: Histidine--tRNA ligase (426 aa).

The protein belongs to the class-II aminoacyl-tRNA synthetase family. In terms of assembly, homodimer.

The protein resides in the cytoplasm. It catalyses the reaction tRNA(His) + L-histidine + ATP = L-histidyl-tRNA(His) + AMP + diphosphate + H(+). The sequence is that of Histidine--tRNA ligase from Colwellia psychrerythraea (strain 34H / ATCC BAA-681) (Vibrio psychroerythus).